Here is a 305-residue protein sequence, read N- to C-terminus: UDP-3-O-acyl-N-acetylglucosamine deacetylase (305 aa).

Positions 79, 238, and 242 each coordinate Zn(2+). Residue His265 is the Proton donor of the active site.

Belongs to the LpxC family. It depends on Zn(2+) as a cofactor.

It catalyses the reaction a UDP-3-O-[(3R)-3-hydroxyacyl]-N-acetyl-alpha-D-glucosamine + H2O = a UDP-3-O-[(3R)-3-hydroxyacyl]-alpha-D-glucosamine + acetate. The protein operates within glycolipid biosynthesis; lipid IV(A) biosynthesis; lipid IV(A) from (3R)-3-hydroxytetradecanoyl-[acyl-carrier-protein] and UDP-N-acetyl-alpha-D-glucosamine: step 2/6. Its function is as follows. Catalyzes the hydrolysis of UDP-3-O-myristoyl-N-acetylglucosamine to form UDP-3-O-myristoylglucosamine and acetate, the committed step in lipid A biosynthesis. The protein is UDP-3-O-acyl-N-acetylglucosamine deacetylase of Erwinia tasmaniensis (strain DSM 17950 / CFBP 7177 / CIP 109463 / NCPPB 4357 / Et1/99).